A 108-amino-acid chain; its full sequence is Nucleoid-associated protein IL1848 (108 aa).

Disordered regions lie at residues 1–26 (MFKG…AQEE) and 88–108 (KERM…KMPF). Residues 9-26 (MMKQAQQMQERMQQAQEE) are compositionally biased toward low complexity.

It belongs to the YbaB/EbfC family. In terms of assembly, homodimer.

The protein localises to the cytoplasm. The protein resides in the nucleoid. Functionally, binds to DNA and alters its conformation. May be involved in regulation of gene expression, nucleoid organization and DNA protection. The polypeptide is Nucleoid-associated protein IL1848 (Idiomarina loihiensis (strain ATCC BAA-735 / DSM 15497 / L2-TR)).